The sequence spans 228 residues: Ribose-5-phosphate isomerase A (228 aa).

Residues 27 to 30, 86 to 89, and 100 to 103 contribute to the substrate site; these read TGTT, DGAD, and KGMG. Glu-109 acts as the Proton acceptor in catalysis. Position 127 (Lys-127) interacts with substrate.

This sequence belongs to the ribose 5-phosphate isomerase family. In terms of assembly, homodimer.

The catalysed reaction is aldehydo-D-ribose 5-phosphate = D-ribulose 5-phosphate. Its pathway is carbohydrate degradation; pentose phosphate pathway; D-ribose 5-phosphate from D-ribulose 5-phosphate (non-oxidative stage): step 1/1. Functionally, catalyzes the reversible conversion of ribose-5-phosphate to ribulose 5-phosphate. This chain is Ribose-5-phosphate isomerase A, found in Borreliella burgdorferi (strain ZS7) (Borrelia burgdorferi).